The following is a 308-amino-acid chain: Taste receptor type 2 member 107 (308 aa).

Over 1–7 (MLSAAEG) the chain is Extracellular. The helical transmembrane segment at 8 to 28 (ILLCVVTSEAVLGVLGDTFIA) threads the bilayer. Residues 29–43 (LANCMEYAKNKKLSK) lie on the Cytoplasmic side of the membrane. Residues 44–64 (IGFILIGLAISRIGVVWIIIL) form a helical membrane-spanning segment. At 65-94 (QGYMQVFFPHILTFGNITEYITYIWVFLNH) the chain is on the extracellular side. The N-linked (GlcNAc...) asparagine glycan is linked to Asn-80. The chain crosses the membrane as a helical span at residues 95 to 115 (LSVWFATNLNILYFLKIANFS). At 116–127 (NSVFLWLKSRVR) the chain is on the cytoplasmic side. Residues 128–148 (VVFIFLSGCLLTSWLLCFPQF) form a helical membrane-spanning segment. Topologically, residues 149–180 (SKMLNNSKMYWGNTSWLQQQKNVFLINQSLTN) are extracellular. 3 N-linked (GlcNAc...) asparagine glycosylation sites follow: Asn-153, Asn-161, and Asn-175. A helical transmembrane segment spans residues 181–201 (LGIFFFIIVSLITCFLLIVFL). At 202–232 (WRHIRQMHSDGSGLRDLNTEAHVKAMRVLIS) the chain is on the cytoplasmic side. A helical transmembrane segment spans residues 233–253 (FAVLFILHFVGLSIQVLCFFL). At 254–258 (PQNNL) the chain is on the extracellular side. Residues 259 to 279 (LFITGLIATCLYPCGHSIILI) form a helical membrane-spanning segment. Over 280-308 (LGNKQLKQASLKALQHLTCCETKRNLSVT) the chain is Cytoplasmic.

It belongs to the G-protein coupled receptor T2R family.

The protein localises to the membrane. Its function is as follows. Putative taste receptor which may play a role in the perception of bitterness. The polypeptide is Taste receptor type 2 member 107 (Rattus norvegicus (Rat)).